A 282-amino-acid chain; its full sequence is 2-dehydro-3-deoxyphosphooctonate aldolase (282 aa).

It belongs to the KdsA family.

It localises to the cytoplasm. The enzyme catalyses D-arabinose 5-phosphate + phosphoenolpyruvate + H2O = 3-deoxy-alpha-D-manno-2-octulosonate-8-phosphate + phosphate. The protein operates within carbohydrate biosynthesis; 3-deoxy-D-manno-octulosonate biosynthesis; 3-deoxy-D-manno-octulosonate from D-ribulose 5-phosphate: step 2/3. It functions in the pathway bacterial outer membrane biogenesis; lipopolysaccharide biosynthesis. The sequence is that of 2-dehydro-3-deoxyphosphooctonate aldolase from Shewanella baltica (strain OS185).